We begin with the raw amino-acid sequence, 98 residues long: Small ribosomal subunit protein bS6 (98 aa).

Belongs to the bacterial ribosomal protein bS6 family.

In terms of biological role, binds together with bS18 to 16S ribosomal RNA. This chain is Small ribosomal subunit protein bS6, found in Staphylococcus epidermidis (strain ATCC 35984 / DSM 28319 / BCRC 17069 / CCUG 31568 / BM 3577 / RP62A).